Here is a 483-residue protein sequence, read N- to C-terminus: Cysteine--tRNA ligase (483 aa).

Residue cysteine 27 participates in Zn(2+) binding. Residues 29 to 39 (ITAYDYCHIGH) carry the 'HIGH' region motif. Zn(2+) is bound by residues cysteine 208, histidine 231, and glutamate 235. A 'KMSKS' region motif is present at residues 263-267 (KMSKS). An ATP-binding site is contributed by lysine 266.

The protein belongs to the class-I aminoacyl-tRNA synthetase family. In terms of assembly, monomer. Zn(2+) serves as cofactor.

The protein resides in the cytoplasm. It carries out the reaction tRNA(Cys) + L-cysteine + ATP = L-cysteinyl-tRNA(Cys) + AMP + diphosphate. This is Cysteine--tRNA ligase from Desulfovibrio desulfuricans (strain ATCC 27774 / DSM 6949 / MB).